A 425-amino-acid polypeptide reads, in one-letter code: MREPDFLNHFLKKGYFKKHAKAVLALSGGLDSMFLFKVLSTYQKELEIELILAHVNHKQRIESDWEEKELRKLAAEAELPIYISNFSGEFSEARARNFRYDFFQEVMKKTGATALVTAHHADDQVETILMRLIRGTRLRYLSGIKEKQVVGEIEIIRPFLHFQKKDFPSIFHFEDTSNQENHYFRNRIRNSYLPELEKENPRFRDAILGIGNEILDYDLAIAELSNNINVEDLQQLFSYSESTQRVLLQTYLNRFPDLNLTKAQFAEVQQILKSKSQYRHPIKNGYELIKEYQQFQICKISPQADEEEDELVLHYQNQVAYQGYLFSFGLPLEGESIQQIPVSRETSIHIRHRKTGDVLIQNGHRKKLRRLFIDLKIPMEKRNSALIIEQFGEIVSILGIATNNLSKKTKNDIMNTVLYIEKIDR.

27–32 (SGGLDS) contacts ATP.

This sequence belongs to the tRNA(Ile)-lysidine synthase family.

The protein resides in the cytoplasm. It catalyses the reaction cytidine(34) in tRNA(Ile2) + L-lysine + ATP = lysidine(34) in tRNA(Ile2) + AMP + diphosphate + H(+). In terms of biological role, ligates lysine onto the cytidine present at position 34 of the AUA codon-specific tRNA(Ile) that contains the anticodon CAU, in an ATP-dependent manner. Cytidine is converted to lysidine, thus changing the amino acid specificity of the tRNA from methionine to isoleucine. The polypeptide is tRNA(Ile)-lysidine synthase (Streptococcus pneumoniae (strain P1031)).